Consider the following 581-residue polypeptide: Oligo-1,6-glucosidase IMA5 (581 aa).

Asp-210 acts as the Nucleophile in catalysis. Glu-272 acts as the Proton donor in catalysis.

The protein belongs to the glycosyl hydrolase 13 family.

It carries out the reaction Hydrolysis of (1-&gt;6)-alpha-D-glucosidic linkages in some oligosaccharides produced from starch and glycogen by alpha-amylase, and in isomaltose.. Alpha-glucosidase with specificity for isomaltose, maltose, and palatinose. This is Oligo-1,6-glucosidase IMA5 (IMA5) from Saccharomyces cerevisiae (strain ATCC 204508 / S288c) (Baker's yeast).